The chain runs to 241 residues: Phosphoadenosine 5'-phosphosulfate reductase (241 aa).

Residue Cys-235 is the Nucleophile; cysteine thiosulfonate intermediate of the active site.

Belongs to the PAPS reductase family. CysH subfamily.

It localises to the cytoplasm. The enzyme catalyses [thioredoxin]-disulfide + sulfite + adenosine 3',5'-bisphosphate + 2 H(+) = [thioredoxin]-dithiol + 3'-phosphoadenylyl sulfate. It functions in the pathway sulfur metabolism; hydrogen sulfide biosynthesis; sulfite from sulfate: step 3/3. In terms of biological role, catalyzes the formation of sulfite from phosphoadenosine 5'-phosphosulfate (PAPS) using thioredoxin as an electron donor. This is Phosphoadenosine 5'-phosphosulfate reductase from Xanthomonas campestris pv. campestris (strain 8004).